The primary structure comprises 204 residues: dITP/XTP pyrophosphatase (204 aa).

14–19 contributes to the substrate binding site; it reads THNKGK. Residues Glu-46 and Asp-75 each coordinate Mg(2+). Asp-75 acts as the Proton acceptor in catalysis. Residues Ser-76, 161–164, Lys-184, and 189–190 contribute to the substrate site; these read FGYD and HR.

The protein belongs to the HAM1 NTPase family. As to quaternary structure, homodimer. Requires Mg(2+) as cofactor.

The enzyme catalyses XTP + H2O = XMP + diphosphate + H(+). The catalysed reaction is dITP + H2O = dIMP + diphosphate + H(+). It catalyses the reaction ITP + H2O = IMP + diphosphate + H(+). In terms of biological role, pyrophosphatase that catalyzes the hydrolysis of nucleoside triphosphates to their monophosphate derivatives, with a high preference for the non-canonical purine nucleotides XTP (xanthosine triphosphate), dITP (deoxyinosine triphosphate) and ITP. Seems to function as a house-cleaning enzyme that removes non-canonical purine nucleotides from the nucleotide pool, thus preventing their incorporation into DNA/RNA and avoiding chromosomal lesions. The sequence is that of dITP/XTP pyrophosphatase from Ruegeria pomeroyi (strain ATCC 700808 / DSM 15171 / DSS-3) (Silicibacter pomeroyi).